The chain runs to 336 residues: O-methyltransferase 2 (336 aa).

Residues Gly-170, Asp-198, Asn-221, Phe-222, and Lys-237 each contribute to the S-adenosyl-L-methionine site. His-241 serves as the catalytic Proton acceptor.

Belongs to the class I-like SAM-binding methyltransferase superfamily. Cation-independent O-methyltransferase family. COMT subfamily.

It carries out the reaction (3,5-dichloro-2,4,6-trihydroxyphenyl)hexan-1-one + S-adenosyl-L-methionine = 1-(3,5-dichloro-2,6-dihydroxy-4-methoxyphenyl)hexan-1-one + S-adenosyl-L-homocysteine + H(+). The sequence is that of O-methyltransferase 2 (omt2) from Dictyostelium discoideum (Social amoeba).